Reading from the N-terminus, the 364-residue chain is Pre-small/secreted glycoprotein (364 aa).

The signal sequence occupies residues 1-32 (MGVTGILQLPRDRFKRTSFFLWVIILFQRTFS). Asparagine 40 is a glycosylation site (N-linked (GlcNAc...) asparagine; by host). Cystine bridges form between cysteine 108–cysteine 135 and cysteine 121–cysteine 147. Asparagine 204, asparagine 228, asparagine 238, asparagine 257, and asparagine 268 each carry an N-linked (GlcNAc...) asparagine; by host glycan.

It belongs to the filoviruses glycoprotein family. In terms of assembly, homodimer; disulfide-linked. The homodimers are linked by two disulfide bonds in a parallel orientation. As to quaternary structure, monomer. This precursor is processed into mature sGP and delta-peptide by host furin or furin-like proteases. The cleavage site corresponds to the furin optimal cleavage sequence [KR]-X-[KR]-R. In terms of processing, N-glycosylated. Post-translationally, O-glycosylated.

Its subcellular location is the secreted. In terms of biological role, seems to possess an anti-inflammatory activity as it can reverse the barrier-decreasing effects of TNF alpha. Might therefore contribute to the lack of inflammatory reaction seen during infection in spite the of extensive necrosis and massive virus production. Does not seem to be involved in activation of primary macrophages. Does not seem to interact specifically with neutrophils. Functionally, viroporin that permeabilizes mammalian cell plasma membranes. It acts by altering permeation of ionic compounds and small molecules. This activity may lead to viral enterotoxic activity. The sequence is that of Pre-small/secreted glycoprotein (GP) from Zaire ebolavirus (strain Eckron-76) (ZEBOV).